Consider the following 143-residue polypeptide: Nucleoside diphosphate kinase (143 aa).

Residues lysine 11, phenylalanine 59, arginine 87, threonine 93, arginine 104, and asparagine 114 each contribute to the ATP site. Histidine 117 (pros-phosphohistidine intermediate) is an active-site residue.

This sequence belongs to the NDK family. Homotetramer. Requires Mg(2+) as cofactor.

The protein resides in the cytoplasm. It catalyses the reaction a 2'-deoxyribonucleoside 5'-diphosphate + ATP = a 2'-deoxyribonucleoside 5'-triphosphate + ADP. The catalysed reaction is a ribonucleoside 5'-diphosphate + ATP = a ribonucleoside 5'-triphosphate + ADP. Major role in the synthesis of nucleoside triphosphates other than ATP. The ATP gamma phosphate is transferred to the NDP beta phosphate via a ping-pong mechanism, using a phosphorylated active-site intermediate. The protein is Nucleoside diphosphate kinase of Salmonella arizonae (strain ATCC BAA-731 / CDC346-86 / RSK2980).